The primary structure comprises 435 residues: ATP-dependent RNA helicase RhlB (435 aa).

Positions 9 to 37 (QKFADLGLNPQVVEGLEKKGFEFCTPIQA) match the Q motif motif. In terms of domain architecture, Helicase ATP-binding spans 40 to 219 (LPVLLSGQDI…FEHMHNPEHV (180 aa)). 53-60 (AQTGTGKT) provides a ligand contact to ATP. Residues 165–168 (DEAD) carry the DEAD box motif. One can recognise a Helicase C-terminal domain in the interval 245 to 390 (ALLQTLIEEE…VSDYDSSALI (146 aa)). The segment at 395 to 435 (APVRTPSARNQQRRTNTGGARSGDRKSNNRRPRQPRQHKEA) is disordered. The segment covering 401–413 (SARNQQRRTNTGG) has biased composition (polar residues). The span at 422 to 435 (NNRRPRQPRQHKEA) shows a compositional bias: basic residues.

The protein belongs to the DEAD box helicase family. RhlB subfamily. As to quaternary structure, component of the RNA degradosome, which is a multiprotein complex involved in RNA processing and mRNA degradation.

Its subcellular location is the cytoplasm. It carries out the reaction ATP + H2O = ADP + phosphate + H(+). Its function is as follows. DEAD-box RNA helicase involved in RNA degradation. Has RNA-dependent ATPase activity and unwinds double-stranded RNA. In Vibrio vulnificus (strain CMCP6), this protein is ATP-dependent RNA helicase RhlB.